Reading from the N-terminus, the 385-residue chain is Protein delta homolog 1 (385 aa).

A signal peptide spans 1-23 (MIATGALLRVLLLLLAFGHSTYG). 6 consecutive EGF-like domains span residues 24–55 (AECDPPCDPQYGFCEADNVCRCHVGWEGPLCD), 53–86 (LCDKCVTAPGCVNGVCKEPWQCICKDGWDGKFCE), 88–125 (DVRACTSTPCANNGTCVDLEKGQYECSCTPGFSGKDCQ), 127–168 (KAGP…NFCE), 172–208 (ATNSCTPNPCENDGVCTDIGGDFRCRCPAGFVDKTCS), and 210–247 (PVSNCASGPCQNGGTCLQHTQVSFECLCKPPFMGPTCA). Over 24–305 (AECDPPCDPQ…KSTPLLTEGQ (282 aa)) the chain is Extracellular. Disulfide bonds link Cys26–Cys37, Cys30–Cys43, Cys45–Cys54, Cys57–Cys68, Cys63–Cys74, Cys76–Cys85, Cys92–Cys103, Cys97–Cys113, Cys115–Cys124, Cys131–Cys144, Cys138–Cys156, and Cys158–Cys167. An O-linked (GalNAc...) serine glycan is attached at Ser94. Asn100 carries N-linked (GlcNAc...) asparagine glycosylation. Asn165 carries N-linked (GlcNAc...) asparagine; atypical; partial glycosylation. N-linked (GlcNAc...) asparagine; atypical glycosylation is present at Asn174. Cystine bridges form between Cys176–Cys187, Cys181–Cys196, Cys198–Cys207, Cys214–Cys225, Cys219–Cys235, and Cys237–Cys246. O-linked (GalNAc...) serine glycosylation occurs at Ser216. Thr224 carries O-linked (GalNAc...) threonine glycosylation. The O-linked (GalNAc...) threonine glycan is linked to Thr258. Residue Thr267 is glycosylated (O-linked (GalNAc...) threonine; partial). Thr271 carries an O-linked (GalNAc...) threonine glycan. The N-linked (GlcNAc...) asparagine glycan is linked to Asn295. The helical transmembrane segment at 306–329 (AICFTILGVLTSLVVLGTVAIVFL) threads the bilayer. At 330-385 (NKCETWVSNLRYNHTFRKKKNLLLQYNSGEELAVNIIFPEKIDMTTFNKEAGDEEI) the chain is on the cytoplasmic side.

As to quaternary structure, monomer. Interacts with SH3RF2. N- and O-glycosylated. Highly expressed in fetal liver, placenta, adult adrenal gland, brain, testis and ovary and, to a lesser degree, in adult kidney, muscle, thymus and heart.

The protein resides in the membrane. It localises to the cytoplasm. Functionally, may have a role in neuroendocrine differentiation. Inhibits adipocyte differentiation. This chain is Protein delta homolog 1 (Dlk1), found in Mus musculus (Mouse).